Consider the following 341-residue polypeptide: RNA 3'-terminal phosphate cyclase (341 aa).

ATP-binding positions include Q102 and 283–287 (HLADQ). H308 serves as the catalytic Tele-AMP-histidine intermediate.

It belongs to the RNA 3'-terminal cyclase family. Type 1 subfamily.

It is found in the cytoplasm. The catalysed reaction is a 3'-end 3'-phospho-ribonucleotide-RNA + ATP = a 3'-end 2',3'-cyclophospho-ribonucleotide-RNA + AMP + diphosphate. In terms of biological role, catalyzes the conversion of 3'-phosphate to a 2',3'-cyclic phosphodiester at the end of RNA. The mechanism of action of the enzyme occurs in 3 steps: (A) adenylation of the enzyme by ATP; (B) transfer of adenylate to an RNA-N3'P to produce RNA-N3'PP5'A; (C) and attack of the adjacent 2'-hydroxyl on the 3'-phosphorus in the diester linkage to produce the cyclic end product. The biological role of this enzyme is unknown but it is likely to function in some aspects of cellular RNA processing. This chain is RNA 3'-terminal phosphate cyclase, found in Pseudomonas aeruginosa (strain LESB58).